The primary structure comprises 209 residues: Small ribosomal subunit protein uS4 (209 aa).

The 62-residue stretch at R99–Q160 folds into the S4 RNA-binding domain.

It belongs to the universal ribosomal protein uS4 family. Part of the 30S ribosomal subunit. Contacts protein S5. The interaction surface between S4 and S5 is involved in control of translational fidelity.

One of the primary rRNA binding proteins, it binds directly to 16S rRNA where it nucleates assembly of the body of the 30S subunit. Functionally, with S5 and S12 plays an important role in translational accuracy. This Koribacter versatilis (strain Ellin345) protein is Small ribosomal subunit protein uS4.